The primary structure comprises 180 residues: Large ribosomal subunit protein bL17 (180 aa).

The segment at 134 to 180 (AQAKAKKAAAMPTEESEAKPAEEGDVVGASEPDAKAPEEPPAEAPEN) is disordered.

This sequence belongs to the bacterial ribosomal protein bL17 family. As to quaternary structure, part of the 50S ribosomal subunit. Contacts protein L32.

The chain is Large ribosomal subunit protein bL17 from Mycobacterium tuberculosis (strain ATCC 25177 / H37Ra).